Here is a 160-residue protein sequence, read N- to C-terminus: Major strawberry allergen Fra a 1-D (160 aa).

The protein belongs to the BetVI family. Monomer.

This Fragaria ananassa (Strawberry) protein is Major strawberry allergen Fra a 1-D.